A 1078-amino-acid polypeptide reads, in one-letter code: MIKASKCNKPRALFLVRVSIPRTFIRNATSAVPTTIKLNDLASLPPITKSLPTNLPFLMPDTLQSLLRFDSEKEKQPSTDKSNDKDKPSRKEKGKDKEKENEEKKDINMDEKYEINEETDTKPTIDPNNPVSSKSNISSSSGGDNNNNNNNNNNNNDSDGKNDDGSPKDKEFLSPSDSGLHPPFLAIAMKDRPFLPGATRHLHVSDPEVIKCVNHMINSNIKSPYFVLFHVRDTNSEDAALDVIKDRDFVHEVGTLCQIIKTTGSEILVYPHYRVKLVDISTPNSRSESIEKEQDNSQTSYLKKFEVSYAVTQQLKDEPYDEQSITINAWTRRIKELYEKLAPKYDQPENKEEIMSNPSMLADFIASKVHAKPEQIQEILESSNVETKLELSLQLLQVEADADEMRQTALKNIRERTEKAYAQSLIKEYTKELLKAAGIGENSKVHKFDERIKHLKMPEEAMKAYKTEKERLGTQSDMEQNVVERYLDWLTQIPFGVYTKDSFNVKKAREILDRDHYGLKDVKDRILEFISVGKISGNVDGKILCLAGPPGTGKTSIAKSIAEALNRKYTRIAVGGVQDVHDVKGHRRTYVASIPGRIVTALTQAKTSNPLMLIDEIDKLDTTSHGGAARAFLEILDPEQNNSFVDNFIEVKVDLSKVLFVCTANYLGSIPGPLRDRMEIIEVNGYTKNDKIEITKRHLIPAAAKKVGLDEGRVVIPDETISRLIDKYCRESGLRHIKSLINRIFSKASRKIVEELEETDVDSHNKDTVEGTLVAKESEKVISDKAKIDTENSPIEYIQSNTEVKAETTTESQQEQEKEKEKDEEIKKLDLPADLKIEVKPETLKDFVGPEIYIKDRLYETLNPGVATGLAYNTSGDGDALYIESILTDSISSDLGNAGLHVTGSLKDVMKESASIAYSFAKQFMVRQFPDNRFFEAAHIHVHCPGGAIPKDGPSAGIAFTSSLVSLALNKSLPNDTAMTGEITLTGKVLAIGGLREKSLGAKRAGYTKIIFPKDCEYQLDEIPDEVKEGLTYIPVEWYSEVFEHLFQGISKEEGNSVWKEEFAKLEDKKKSKKTNTK.

The transit peptide at 1 to 27 directs the protein to the mitochondrion; that stretch reads MIKASKCNKPRALFLVRVSIPRTFIRN. Residues 71-123 are compositionally biased toward basic and acidic residues; sequence SEKEKQPSTDKSNDKDKPSRKEKGKDKEKENEEKKDINMDEKYEINEETDTKP. A disordered region spans residues 71-179; that stretch reads SEKEKQPSTD…KEFLSPSDSG (109 aa). The span at 127–157 shows a compositional bias: low complexity; sequence PNNPVSSKSNISSSSGGDNNNNNNNNNNNND. A compositionally biased stretch (basic and acidic residues) spans 158–172; the sequence is SDGKNDDGSPKDKEF. In terms of domain architecture, Lon N-terminal spans 182–400; sequence PPFLAIAMKD…LSLQLLQVEA (219 aa). Position 548 to 555 (548 to 555) interacts with ATP; sequence GPPGTGKT. The disordered stretch occupies residues 792–825; the sequence is NSPIEYIQSNTEVKAETTTESQQEQEKEKEKDEE. Residues 815–825 show a composition bias toward basic and acidic residues; sequence EQEKEKEKDEE. Residues 861–1049 form the Lon proteolytic domain; that stretch reads TLNPGVATGL…SEVFEHLFQG (189 aa). Residues Ser955 and Lys998 contribute to the active site.

Belongs to the peptidase S16 family. In terms of assembly, homohexamer or homoheptamer. Organized in a ring with a central cavity.

It is found in the mitochondrion matrix. It catalyses the reaction Hydrolysis of proteins in presence of ATP.. Functionally, ATP-dependent serine protease that mediates the selective degradation of misfolded, unassembled or oxidatively damaged polypeptides as well as certain short-lived regulatory proteins in the mitochondrial matrix. May also have a chaperone function in the assembly of inner membrane protein complexes. Participates in the regulation of mitochondrial gene expression and in the maintenance of the integrity of the mitochondrial genome. Binds to mitochondrial DNA in a site-specific manner. This is Lon protease homolog, mitochondrial from Candida albicans (strain SC5314 / ATCC MYA-2876) (Yeast).